A 170-amino-acid chain; its full sequence is Ureidoglycolate lyase (170 aa).

The protein belongs to the ureidoglycolate lyase family. In terms of assembly, homodimer. Requires Ni(2+) as cofactor.

The catalysed reaction is (S)-ureidoglycolate = urea + glyoxylate. Its pathway is nitrogen metabolism; (S)-allantoin degradation. In terms of biological role, catalyzes the catabolism of the allantoin degradation intermediate (S)-ureidoglycolate, generating urea and glyoxylate. Involved in the utilization of allantoin as nitrogen source. This chain is Ureidoglycolate lyase, found in Pseudomonas savastanoi pv. phaseolicola (strain 1448A / Race 6) (Pseudomonas syringae pv. phaseolicola (strain 1448A / Race 6)).